Consider the following 178-residue polypeptide: Probable inosine/xanthosine triphosphatase (178 aa).

This sequence belongs to the YjjX NTPase family. In terms of assembly, homodimer. It depends on Mg(2+) as a cofactor. Requires Mn(2+) as cofactor.

It carries out the reaction XTP + H2O = XDP + phosphate + H(+). The catalysed reaction is ITP + H2O = IDP + phosphate + H(+). In terms of biological role, phosphatase that hydrolyzes non-canonical purine nucleotides such as XTP and ITP to their respective diphosphate derivatives. Probably excludes non-canonical purines from DNA/RNA precursor pool, thus preventing their incorporation into DNA/RNA and avoiding chromosomal lesions. The protein is Probable inosine/xanthosine triphosphatase of Pyrobaculum calidifontis (strain DSM 21063 / JCM 11548 / VA1).